Reading from the N-terminus, the 4836-residue chain is E3 ubiquitin-protein ligase HERC2 (4836 aa).

Residues Leu-58 to Ala-90 form a disordered region. Residues Thr-72 to Glu-85 show a composition bias toward basic and acidic residues. A Phosphothreonine modification is found at Thr-273. The stretch at Pro-416–Lys-462 is one RCC1 1-1 repeat. Residues Arg-463 to Ala-513 form an RCC1 1-2 repeat. One copy of the RCC1 1-3 repeat lies at Thr-514–Ala-569. One copy of the RCC1 1-4 repeat lies at Glu-570–Val-621. The stretch at Asn-624–Lys-675 is one RCC1 1-5 repeat. Phosphothreonine is present on Thr-648. The RCC1 1-6 repeat unit spans residues Asp-676–Glu-727. The RCC1 1-7 repeat unit spans residues Ser-729 to Ser-779. A coiled-coil region spans residues Ala-948–Thr-981. One can recognise a Cytochrome b5 heme-binding domain in the interval Val-1208–Leu-1284. Position 1578 is a phosphoserine (Ser-1578). The region spanning Ser-1860 to Pro-1933 is the MIB/HERC2 domain. Ser-1943 carries the phosphoserine modification. Thr-1945 carries the post-translational modification Phosphothreonine. The segment at Gly-2351–Gln-2376 is disordered. Ser-2455 carries the phosphoserine modification. Residues Arg-2555–Tyr-2631 form the CPH domain. The ZZ-type zinc finger occupies His-2704–Gln-2756. Zn(2+) contacts are provided by Cys-2709, Cys-2712, Cys-2724, Cys-2727, Cys-2733, Cys-2736, His-2742, and His-2746. The DOC domain occupies Phe-2760 to Asp-2937. Residues Ala-2928 to Lys-2947 are disordered. Ser-2929 bears the Phosphoserine mark. An RCC1 2-1 repeat occupies Arg-2959–Val-3010. The stretch at Glu-3011–Val-3065 is one RCC1 2-2 repeat. The stretch at Asp-3066 to Ser-3117 is one RCC1 2-3 repeat. An RCC1 2-4 repeat occupies Gly-3119–Leu-3169. An RCC1 2-5 repeat occupies Glu-3172–Lys-3223. Residues Gly-3225–Asp-3275 form an RCC1 2-6 repeat. The stretch at Ser-3276–Thr-3327 is one RCC1 2-7 repeat. Disordered stretches follow at residues Asp-3479–Ile-3499, Lys-3517–Asp-3537, and Ser-3604–Val-3632. Residues Ala-3480–Ser-3495 show a composition bias toward low complexity. Composition is skewed to polar residues over residues Ser-3604–Pro-3613 and His-3620–Thr-3631. One copy of the RCC1 3-1 repeat lies at Ser-3953–Ala-4004. One copy of the RCC1 3-2 repeat lies at Gly-4006–Ser-4058. One copy of the RCC1 3-3 repeat lies at Gly-4060–Ala-4110. Residues Gly-4112–Asp-4164 form an RCC1 3-4 repeat. Residues Asp-4166–Lys-4216 form an RCC1 3-5 repeat. One copy of the RCC1 3-6 repeat lies at Gly-4218–Glu-4268. One copy of the RCC1 3-7 repeat lies at Gly-4270–Thr-4320. The HECT domain maps to Asp-4459 to Asp-4796. Cys-4764 acts as the Glycyl thioester intermediate in catalysis. The segment at Glu-4806–His-4836 is disordered. The span at Ala-4808 to Asp-4822 shows a compositional bias: acidic residues. Phosphoserine occurs at positions 4812, 4813, and 4816. Thr-4829 is subject to Phosphothreonine.

In terms of assembly, interacts (when phosphorylated at Thr-4829 and sumoylated) with RNF8 (via FHA domain); this interaction increases after ionising radiation (IR) treatment. Interacts with XPA. Interacts with NEURL4. Via its interaction with NEURL4, may indirectly interact with CCP110 and CEP97. Phosphorylation at Thr-4829 is required for interaction with RNF8. Post-translationally, sumoylated with SUMO1 by PIAS4 in response to double-strand breaks (DSBs), promoting the interaction with RNF8. As to expression, highest levels are found in brain and testis with lower levels in heart, lung, liver, skeletal muscle and kidney. Little expression detected in spleen.

Its subcellular location is the cytoplasm. The protein resides in the cytoskeleton. It is found in the microtubule organizing center. It localises to the centrosome. The protein localises to the centriole. Its subcellular location is the nucleus. It catalyses the reaction S-ubiquitinyl-[E2 ubiquitin-conjugating enzyme]-L-cysteine + [acceptor protein]-L-lysine = [E2 ubiquitin-conjugating enzyme]-L-cysteine + N(6)-ubiquitinyl-[acceptor protein]-L-lysine.. The protein operates within protein modification; protein ubiquitination. Functionally, E3 ubiquitin-protein ligase that regulates ubiquitin-dependent retention of repair proteins on damaged chromosomes. Recruited to sites of DNA damage in response to ionizing radiation (IR) and facilitates the assembly of UBE2N and RNF8 promoting DNA damage-induced formation of 'Lys-63'-linked ubiquitin chains. Acts as a mediator of binding specificity between UBE2N and RNF8. Involved in the maintenance of RNF168 levels. E3 ubiquitin-protein ligase that promotes the ubiquitination and proteasomal degradation of XPA which influences the circadian oscillation of DNA excision repair activity. By controlling the steady-state expression of the IGF1R receptor, indirectly regulates the insulin-like growth factor receptor signaling pathway. Also modulates iron metabolism by regulating the basal turnover of FBXL5. This is E3 ubiquitin-protein ligase HERC2 from Mus musculus (Mouse).